Here is a 473-residue protein sequence, read N- to C-terminus: Photosystem II CP43 reaction center protein (473 aa).

The propeptide occupies 1–14 (MKTLYSLRRFYHVE). Thr-15 bears the N-acetylthreonine mark. Thr-15 is modified (phosphothreonine). 5 helical membrane passes run 69–93 (LFEV…PHLA), 134–155 (LLGP…KDRN), 178–200 (KALY…RKIT), 255–275 (KPFA…LSYS), and 291–312 (CFNN…ASQA). Position 367 (Glu-367) interacts with [CaMn4O5] cluster. The helical transmembrane segment at 447–471 (RARAAAAGFEKGIDRDFEPVLSMTP) threads the bilayer.

The protein belongs to the PsbB/PsbC family. PsbC subfamily. As to quaternary structure, PSII is composed of 1 copy each of membrane proteins PsbA, PsbB, PsbC, PsbD, PsbE, PsbF, PsbH, PsbI, PsbJ, PsbK, PsbL, PsbM, PsbT, PsbX, PsbY, PsbZ, Psb30/Ycf12, at least 3 peripheral proteins of the oxygen-evolving complex and a large number of cofactors. It forms dimeric complexes. Binds multiple chlorophylls and provides some of the ligands for the Ca-4Mn-5O cluster of the oxygen-evolving complex. It may also provide a ligand for a Cl- that is required for oxygen evolution. PSII binds additional chlorophylls, carotenoids and specific lipids. is required as a cofactor.

Its subcellular location is the plastid. The protein localises to the chloroplast thylakoid membrane. In terms of biological role, one of the components of the core complex of photosystem II (PSII). It binds chlorophyll and helps catalyze the primary light-induced photochemical processes of PSII. PSII is a light-driven water:plastoquinone oxidoreductase, using light energy to abstract electrons from H(2)O, generating O(2) and a proton gradient subsequently used for ATP formation. This Jasminum nudiflorum (Winter jasmine) protein is Photosystem II CP43 reaction center protein.